The sequence spans 100 residues: Small ribosomal subunit protein uS14c (100 aa).

Belongs to the universal ribosomal protein uS14 family. As to quaternary structure, part of the 30S ribosomal subunit.

The protein resides in the plastid. Its subcellular location is the chloroplast. Binds 16S rRNA, required for the assembly of 30S particles. The chain is Small ribosomal subunit protein uS14c from Tupiella akineta (Green alga).